Reading from the N-terminus, the 274-residue chain is tRNA-cytidine(32) 2-sulfurtransferase (274 aa).

The PP-loop motif signature appears at 40-45; it reads SGGKDS. 3 residues coordinate [4Fe-4S] cluster: Cys115, Cys118, and Cys206.

It belongs to the TtcA family. Homodimer. Mg(2+) is required as a cofactor. Requires [4Fe-4S] cluster as cofactor.

Its subcellular location is the cytoplasm. The enzyme catalyses cytidine(32) in tRNA + S-sulfanyl-L-cysteinyl-[cysteine desulfurase] + AH2 + ATP = 2-thiocytidine(32) in tRNA + L-cysteinyl-[cysteine desulfurase] + A + AMP + diphosphate + H(+). Its pathway is tRNA modification. Functionally, catalyzes the ATP-dependent 2-thiolation of cytidine in position 32 of tRNA, to form 2-thiocytidine (s(2)C32). The sulfur atoms are provided by the cysteine/cysteine desulfurase (IscS) system. The sequence is that of tRNA-cytidine(32) 2-sulfurtransferase from Pseudomonas fluorescens (strain Pf0-1).